A 226-amino-acid chain; its full sequence is ATP synthase F(0) complex subunit a (226 aa).

Transmembrane regions (helical) follow at residues 12-32 (PTMMGLPIVILIIMFPSILFP), 68-88 (WALMLMSLILFIGSTNLLGLL), 97-117 (QLSMNLGMAIPLWAGTVITGF), 138-158 (IPMLVVIETISLFIQPMALAV), 164-184 (ITAGHLLMHLIGGAALALMNI), and 200-222 (TILEFAVALIQAYVFTLLVSLYL).

Belongs to the ATPase A chain family. In terms of assembly, component of the ATP synthase complex composed at least of ATP5F1A/subunit alpha, ATP5F1B/subunit beta, ATP5MC1/subunit c (homooctomer), MT-ATP6/subunit a, MT-ATP8/subunit 8, ATP5ME/subunit e, ATP5MF/subunit f, ATP5MG/subunit g, ATP5MK/subunit k, ATP5MJ/subunit j, ATP5F1C/subunit gamma, ATP5F1D/subunit delta, ATP5F1E/subunit epsilon, ATP5PF/subunit F6, ATP5PB/subunit b, ATP5PD/subunit d, ATP5PO/subunit OSCP. ATP synthase complex consists of a soluble F(1) head domain (subunits alpha(3) and beta(3)) - the catalytic core - and a membrane F(0) domain - the membrane proton channel (subunits c, a, 8, e, f, g, k and j). These two domains are linked by a central stalk (subunits gamma, delta, and epsilon) rotating inside the F1 region and a stationary peripheral stalk (subunits F6, b, d, and OSCP). Interacts with DNAJC30; interaction is direct.

Its subcellular location is the mitochondrion inner membrane. It carries out the reaction H(+)(in) = H(+)(out). In terms of biological role, subunit a, of the mitochondrial membrane ATP synthase complex (F(1)F(0) ATP synthase or Complex V) that produces ATP from ADP in the presence of a proton gradient across the membrane which is generated by electron transport complexes of the respiratory chain. ATP synthase complex consist of a soluble F(1) head domain - the catalytic core - and a membrane F(1) domain - the membrane proton channel. These two domains are linked by a central stalk rotating inside the F(1) region and a stationary peripheral stalk. During catalysis, ATP synthesis in the catalytic domain of F(1) is coupled via a rotary mechanism of the central stalk subunits to proton translocation. With the subunit c (ATP5MC1), forms the proton-conducting channel in the F(0) domain, that contains two crucial half-channels (inlet and outlet) that facilitate proton movement from the mitochondrial intermembrane space (IMS) into the matrix. Protons are taken up via the inlet half-channel and released through the outlet half-channel, following a Grotthuss mechanism. This is ATP synthase F(0) complex subunit a from Felis catus (Cat).